The sequence spans 156 residues: Putative HTH-type transcriptional regulator YffB (156 aa).

The HTH rrf2-type domain occupies 2-137; that stretch reads KLSSGWEQSV…SNVSLAQVAD (136 aa).

The sequence is that of Putative HTH-type transcriptional regulator YffB (yffB) from Lactococcus lactis subsp. lactis (strain IL1403) (Streptococcus lactis).